Here is a 676-residue protein sequence, read N- to C-terminus: Probable metal-nicotianamine transporter YSL6 (676 aa).

The next 13 helical transmembrane spans lie at 38–58 (ITIRGLTVSALLGTLFCIITH), 62–82 (LTVGIIPSLNVAAGLLGFFFV), 110–130 (CVVACYGLAFSGGFGSYLIAM), 154–174 (GLWWMIGFLFVVSFLGLFSLV), 276–296 (IVNCSVLLGAIISWGILWPFV), 321–341 (VFIAIAIILGDGLYNLVKIIA), 392–412 (FAIAGYVGLAAISTATIPIIF), 413–433 (PPLKWYFVLCSYFIAPALAFC), 452–472 (IGLFIIASVVGSDGGVIAGLA), 510–530 (VGTAMGCVIAPLTFWLFWTAF), 561–581 (LPKHCLALCYGFFIAALIVNL), 604–624 (FYIGAYFAIDMFVGTVILFVW), and 639–659 (VASGLICGDGIWTIPSAILSI).

Belongs to the YSL (TC 2.A.67.2) family.

The protein resides in the membrane. May be involved in the transport of nicotianamine-chelated metals. This Arabidopsis thaliana (Mouse-ear cress) protein is Probable metal-nicotianamine transporter YSL6 (YSL6).